We begin with the raw amino-acid sequence, 448 residues long: Cysteine--tRNA ligase (448 aa).

Zn(2+) is bound at residue Cys-27. Positions 29–39 (PTVYNYIHVGN) match the 'HIGH' region motif. 3 residues coordinate Zn(2+): Cys-210, His-235, and Glu-239. Positions 267–271 (KMSKS) match the 'KMSKS' region motif. Lys-270 serves as a coordination point for ATP.

The protein belongs to the class-I aminoacyl-tRNA synthetase family. Monomer. Zn(2+) serves as cofactor.

It is found in the cytoplasm. The enzyme catalyses tRNA(Cys) + L-cysteine + ATP = L-cysteinyl-tRNA(Cys) + AMP + diphosphate. The polypeptide is Cysteine--tRNA ligase (Lactococcus lactis subsp. cremoris (strain SK11)).